Reading from the N-terminus, the 426-residue chain is Glutamate-1-semialdehyde 2,1-aminomutase (426 aa).

Lysine 268 carries the N6-(pyridoxal phosphate)lysine modification.

The protein belongs to the class-III pyridoxal-phosphate-dependent aminotransferase family. HemL subfamily. Pyridoxal 5'-phosphate is required as a cofactor.

The protein localises to the cytoplasm. It catalyses the reaction (S)-4-amino-5-oxopentanoate = 5-aminolevulinate. Its pathway is porphyrin-containing compound metabolism; protoporphyrin-IX biosynthesis; 5-aminolevulinate from L-glutamyl-tRNA(Glu): step 2/2. This Saccharolobus islandicus (strain M.16.27) (Sulfolobus islandicus) protein is Glutamate-1-semialdehyde 2,1-aminomutase.